Consider the following 956-residue polypeptide: Bifunctional glutamine synthetase adenylyltransferase/adenylyl-removing enzyme (956 aa).

The adenylyl removase stretch occupies residues 1-450 (MENMSEQALP…YFKETVGGQE (450 aa)). The interval 456–956 (EQWTAQLWSL…IYEQVLNNGQ (501 aa)) is adenylyl transferase.

The protein belongs to the GlnE family. Mg(2+) serves as cofactor.

It catalyses the reaction [glutamine synthetase]-O(4)-(5'-adenylyl)-L-tyrosine + phosphate = [glutamine synthetase]-L-tyrosine + ADP. The catalysed reaction is [glutamine synthetase]-L-tyrosine + ATP = [glutamine synthetase]-O(4)-(5'-adenylyl)-L-tyrosine + diphosphate. Involved in the regulation of glutamine synthetase GlnA, a key enzyme in the process to assimilate ammonia. When cellular nitrogen levels are high, the C-terminal adenylyl transferase (AT) inactivates GlnA by covalent transfer of an adenylyl group from ATP to specific tyrosine residue of GlnA, thus reducing its activity. Conversely, when nitrogen levels are low, the N-terminal adenylyl removase (AR) activates GlnA by removing the adenylyl group by phosphorolysis, increasing its activity. The regulatory region of GlnE binds the signal transduction protein PII (GlnB) which indicates the nitrogen status of the cell. This is Bifunctional glutamine synthetase adenylyltransferase/adenylyl-removing enzyme from Shewanella loihica (strain ATCC BAA-1088 / PV-4).